Consider the following 400-residue polypeptide: Centrosomal protein CEP57L1 (400 aa).

Ser45 carries the phosphoserine modification. Coiled coils occupy residues 47–111 (NNQA…KKDI) and 138–213 (NVER…QDRA). Disordered stretches follow at residues 222-261 (REPP…EPVS) and 314-400 (MESK…KWEQ). The segment covering 244–258 (RTTSQARANPQSSGE) has biased composition (polar residues). A coiled-coil region spans residues 261–345 (SICDSLSELL…EKIENSRINE (85 aa)). Basic and acidic residues-rich tracts occupy residues 314 to 342 (MESK…ENSR) and 391 to 400 (LRRDDIKWEQ).

The protein belongs to the translokin family.

Its subcellular location is the cytoplasm. The protein localises to the cytoskeleton. It is found in the microtubule organizing center. It localises to the centrosome. Its function is as follows. Centrosomal protein which may be required for microtubule attachment to centrosomes. This Mus musculus (Mouse) protein is Centrosomal protein CEP57L1 (Cep57l1).